The primary structure comprises 101 residues: Phosphoribosyl-AMP cyclohydrolase (101 aa).

Mg(2+) is bound at residue aspartate 71. A Zn(2+)-binding site is contributed by cysteine 72. Residues aspartate 73 and aspartate 75 each coordinate Mg(2+). 2 residues coordinate Zn(2+): cysteine 88 and cysteine 95.

Belongs to the PRA-CH family. As to quaternary structure, homodimer. It depends on Mg(2+) as a cofactor. Zn(2+) is required as a cofactor.

The protein resides in the cytoplasm. The enzyme catalyses 1-(5-phospho-beta-D-ribosyl)-5'-AMP + H2O = 1-(5-phospho-beta-D-ribosyl)-5-[(5-phospho-beta-D-ribosylamino)methylideneamino]imidazole-4-carboxamide. It participates in amino-acid biosynthesis; L-histidine biosynthesis; L-histidine from 5-phospho-alpha-D-ribose 1-diphosphate: step 3/9. Catalyzes the hydrolysis of the adenine ring of phosphoribosyl-AMP. The protein is Phosphoribosyl-AMP cyclohydrolase of Bacillus cereus (strain AH820).